The chain runs to 1717 residues: PH domain leucine-rich repeat-containing protein phosphatase 1 (1717 aa).

Residue M1 is modified to N-acetylmethionine. Disordered regions lie at residues 1–25 (MEPA…SAPA), 41–118 (LAAA…GANS), 136–156 (AASS…GAAG), and 252–470 (PGAA…PPPT). A compositionally biased stretch (low complexity) spans 98-110 (APQPIAGGAAPVP). Pro residues predominate over residues 262–274 (EPPPEAGPRLAPP). Composition is skewed to low complexity over residues 313-325 (SRRA…DSSP) and 333-345 (PVSS…PVVS). S317 is subject to Phosphoserine. Composition is skewed to polar residues over residues 346 to 358 (DTES…SAES) and 408 to 417 (QTASSPQPQQ). A Phosphoserine modification is found at S412. The PH domain maps to 536-636 (RIQLSGMYNV…WLRQVSKVAS (101 aa)). LRR repeat units lie at residues 638–659 (RISS…LFYS), 661–682 (DLTH…PAAR), 692–712 (KLKS…AVCS), 715–736 (TLAE…VGVM), 738–760 (NLQT…ENMK), 761–783 (QLSY…EKLT), 784–804 (AVDK…QALR), 808–831 (HIKH…DFLQ), 832–853 (HVTQ…IFNN), 873–894 (FLKA…PVPN), 895–916 (YLSY…VCES), 918–939 (KLEV…LFCN), 941–962 (SLRK…LERT), 963–984 (SVEV…LLMK), 987–1008 (SLRF…TLSE), 1013–1033 (ILQE…PLLT), 1037–1058 (HLKI…KMAK), 1061–1082 (ELEE…IMNC), 1084–1105 (RMHT…MQLP), 1106–1127 (EIKC…ENLP), and 1129–1150 (KLQE…TLEL). The tract at residues 1076-1205 (PTTIMNCRRM…NNFCDNREAL (130 aa)) is interaction with NHERF1. In terms of domain architecture, PPM-type phosphatase spans 1175–1422 (SHGYTEASGV…DSISAVVVQL (248 aa)). The Mn(2+) site is built by D1210, G1211, K1374, and D1413. Disordered stretches follow at residues 1458–1510 (DRPS…SPAY) and 1673–1717 (EVKE…DTPL). Residues 1468–1489 (SSSSGMASEISSELSTSEMSSE) show a composition bias toward low complexity. A PDZ-binding; required for interaction with NHERF1 motif is present at residues 1715 to 1717 (TPL).

In terms of assembly, interacts with the nucleotide free form of K-Ras (KRAS) via its LRR repeats. Interacts with AKT2, AKT3, PRKCB isoform beta-II, STK4, RPS6KB1, RAF1. Isoform 1 (predominantly) and isoform 2 interact with BRAP. Interacts with FKBP5; FKBP5 acts as a scaffold for PHLPP1 and Akt. Interacts with SCRIB; SCRIB acts as a scaffold for PHLPP1 and Akt. Interacts with NHERF1; NHERF1 scaffolds a heterotrimeric complex with PTEN at the plasma membrane. Interacts with WDR48 and USP12. The cofactor is Mn(2+). As to expression, in colorectal cancer tissue, expression is highest in the surface epithelium of normal colonic mucosa adjacent to the cancer tissue but is largely excluded from the crypt bases. Expression is lost or significantly decreased in 78% of tested tumors (at protein level). Ubiquitously expressed in non-cancerous tissues.

Its subcellular location is the cytoplasm. The protein localises to the membrane. The protein resides in the nucleus. It localises to the cell membrane. The catalysed reaction is O-phospho-L-seryl-[protein] + H2O = L-seryl-[protein] + phosphate. It catalyses the reaction O-phospho-L-threonyl-[protein] + H2O = L-threonyl-[protein] + phosphate. Its activity is regulated as follows. Insensitive to okadaic acid. Deubiquitination by WDR48-USP12 complex positively regulates PHLPP1 stability. In terms of biological role, protein phosphatase involved in regulation of Akt and PKC signaling. Mediates dephosphorylation in the C-terminal domain hydrophobic motif of members of the AGC Ser/Thr protein kinase family; specifically acts on 'Ser-473' of AKT2 and AKT3, 'Ser-660' of PRKCB and 'Ser-657' of PRKCA. Isoform 2 seems to have a major role in regulating Akt signaling in hippocampal neurons. Akt regulates the balance between cell survival and apoptosis through a cascade that primarily alters the function of transcription factors that regulate pro- and antiapoptotic genes. Dephosphorylation of 'Ser-473' of Akt triggers apoptosis and suppression of tumor growth. Dephosphorylation of PRKCA and PRKCB leads to their destabilization and degradation. Dephosphorylates STK4 on 'Thr-387' leading to STK4 activation and apoptosis. Dephosphorylates RPS6KB1 and is involved in regulation of cap-dependent translation. Inhibits cancer cell proliferation and may act as a tumor suppressor. Dephosphorylates RAF1 inhibiting its kinase activity. May act as a negative regulator of K-Ras signaling in membrane rafts. Involved in the hippocampus-dependent long-term memory formation. Involved in circadian control by regulating the consolidation of circadian periodicity after resetting. Involved in development and function of regulatory T-cells. This chain is PH domain leucine-rich repeat-containing protein phosphatase 1 (PHLPP1), found in Homo sapiens (Human).